The sequence spans 147 residues: Mineralocorticoid receptor (147 aa).

The 147-residue stretch at 1 to 147 (FALSWRSYKH…SQALKVEFPA (147 aa)) folds into the NR LBD domain. Residues R6 and T134 each contribute to the 21-hydroxyprogesterone site. Aldosterone is bound by residues R6 and T134. Positions 6 and 134 each coordinate progesterone.

Belongs to the nuclear hormone receptor family. NR3 subfamily.

The protein resides in the cytoplasm. Its subcellular location is the nucleus. Its function is as follows. Receptor for both mineralocorticoids (MC) such as aldosterone and glucocorticoids (GC) such as corticosterone or cortisol. Binds to mineralocorticoid response elements (MRE) and transactivates target genes. The effect of MC is to increase ion and water transport and thus raise extracellular fluid volume and blood pressure and lower potassium levels. In Gallus gallus (Chicken), this protein is Mineralocorticoid receptor (NR3C2).